A 259-amino-acid chain; its full sequence is Phosphatidylglycerol--prolipoprotein diacylglyceryl transferase (259 aa).

4 consecutive transmembrane segments (helical) span residues 10-30, 50-70, 86-106, and 112-132; these read IGLL…LFAY, IISW…ILFY, WKGG…MYIF, and IKFL…IFLG. R133 is a binding site for a 1,2-diacyl-sn-glycero-3-phospho-(1'-sn-glycerol). The next 3 membrane-spanning stretches (helical) occupy residues 169-189, 197-217, and 227-247; these read LYEA…LFFF, GMLF…IEFV, and ILFN…ILGI.

Belongs to the Lgt family.

The protein localises to the cell inner membrane. It carries out the reaction L-cysteinyl-[prolipoprotein] + a 1,2-diacyl-sn-glycero-3-phospho-(1'-sn-glycerol) = an S-1,2-diacyl-sn-glyceryl-L-cysteinyl-[prolipoprotein] + sn-glycerol 1-phosphate + H(+). It functions in the pathway protein modification; lipoprotein biosynthesis (diacylglyceryl transfer). Catalyzes the transfer of the diacylglyceryl group from phosphatidylglycerol to the sulfhydryl group of the N-terminal cysteine of a prolipoprotein, the first step in the formation of mature lipoproteins. In Ehrlichia ruminantium (strain Gardel), this protein is Phosphatidylglycerol--prolipoprotein diacylglyceryl transferase.